The primary structure comprises 43 residues: Protein PsbN (43 aa).

Residues 5 to 27 form a helical membrane-spanning segment; the sequence is TLVAISISGSLVSFTGYALYTAF.

This sequence belongs to the PsbN family.

The protein resides in the plastid. It localises to the chloroplast thylakoid membrane. Its function is as follows. May play a role in photosystem I and II biogenesis. The protein is Protein PsbN of Drimys granadensis.